We begin with the raw amino-acid sequence, 736 residues long: Catalase-peroxidase (736 aa).

Positions 100–223 (WHSAGTYRIG…LAAVQMGLIY (124 aa)) form a cross-link, tryptophyl-tyrosyl-methioninium (Trp-Tyr) (with M-249). The active-site Proton acceptor is the His101. The tryptophyl-tyrosyl-methioninium (Tyr-Met) (with W-100) cross-link spans 223–249 (YVNPEGPDGKPDPVAAARDIRETFRRM). His264 provides a ligand contact to heme b.

The protein belongs to the peroxidase family. Peroxidase/catalase subfamily. Homodimer or homotetramer. Requires heme b as cofactor. In terms of processing, formation of the three residue Trp-Tyr-Met cross-link is important for the catalase, but not the peroxidase activity of the enzyme.

The catalysed reaction is H2O2 + AH2 = A + 2 H2O. It catalyses the reaction 2 H2O2 = O2 + 2 H2O. Functionally, bifunctional enzyme with both catalase and broad-spectrum peroxidase activity. This Geobacillus kaustophilus (strain HTA426) protein is Catalase-peroxidase.